Consider the following 258-residue polypeptide: Nuclear egress protein 2 (258 aa).

At 1-228 the chain is on the perinuclear space side; sequence MLKEKMYDEL…TVPIFARRNN (228 aa). Residues 229 to 249 form a helical membrane-spanning segment; that stretch reads ILCGFLVAALLIVCYVIFKEF. Residues 250-258 are Nuclear-facing; that stretch reads ALSADFSAV.

This sequence belongs to the herpesviridae NEC2 protein family. Forms a heterohexameric complex with NEC1. In terms of processing, phosphorylated.

The protein resides in the host nucleus inner membrane. Functionally, plays an essential role in virion nuclear egress, the first step of virion release from infected cell. Within the host nucleus, NEC1 interacts with the newly formed capsid through the vertexes and directs it to the inner nuclear membrane by associating with NEC2. Induces the budding of the capsid at the inner nuclear membrane as well as its envelopment into the perinuclear space. There, the NEC1/NEC2 complex promotes the fusion of the enveloped capsid with the outer nuclear membrane and the subsequent release of the viral capsid into the cytoplasm where it will reach the secondary budding sites in the host Golgi or trans-Golgi network. In Homo sapiens (Human), this protein is Nuclear egress protein 2.